A 178-amino-acid chain; its full sequence is Caveolin-1 (178 aa).

Residue Ser-2 is modified to N-acetylserine. Position 2 is a phosphoserine (Ser-2). Positions 2-94 (SGGKYVDSEG…WKASFTTFTV (93 aa)) are required for homooligomerization. At 2 to 104 (SGGKYVDSEG…TKYWFYRLLS (103 aa)) the chain is on the cytoplasmic side. Lys-5 is modified (N6-acetyllysine; alternate). Residue Lys-5 forms a Glycyl lysine isopeptide (Lys-Gly) (interchain with G-Cter in ubiquitin); alternate linkage. Phosphotyrosine is present on Tyr-6. Ser-9 carries the post-translational modification Phosphoserine. Tyr-14 bears the Phosphotyrosine; by ABL1 mark. At Tyr-25 the chain carries Phosphotyrosine. Glycyl lysine isopeptide (Lys-Gly) (interchain with G-Cter in ubiquitin) cross-links involve residues Lys-26, Lys-30, Lys-39, Lys-47, and Lys-57. The interval 82–94 (DGIWKASFTTFTV) is interaction with CAVIN3. An intramembrane region (helical) is located at residues 105-125 (ALFGIPMALIWGIYFAILSFL). Topologically, residues 126–178 (HIWAVVPCIKSFLIEIQCISRVYSIYVHTFCDPLFEAIGKIFSNIRINMQKEI) are cytoplasmic. The tract at residues 131–142 (VPCIKSFLIEIQ) is interacts with SPRY1, SPRY2, SPRY3 and SPRY4. S-palmitoyl cysteine attachment occurs at residues Cys-133, Cys-143, and Cys-156. Residues 149-160 (SIYVHTFCDPLF) form an interacts with SPRY1, SPRY2, and SPRY4 region. The tract at residues 167 to 178 (FSNIRINMQKEI) is interacts with SPRY1, SPRY2, SPRY3 and SPRY4.

This sequence belongs to the caveolin family. As to quaternary structure, homooligomer. Interacts (via the N-terminus) with DPP4; the interaction is direct. Forms a stable heterooligomeric complex with CAV2 that targets to lipid rafts and drives caveolae formation. Interacts with PACSIN2; this interaction induces membrane tubulation. Interacts with BMX, BTK, CTNNB1, CDH1, GLIPR2, JUP, NOSTRIN, SNAP25 and STX1A. Interacts with SLC7A9. Interacts with TGFBR1. Interacts with CAVIN3 (via leucine-zipper domain) in a cholesterol-sensitive manner. Interacts with CAVIN1. Interacts with EHD2 in a cholesterol-dependent manner. Forms a ternary complex with UBXN6 and VCP; mediates CAV1 targeting to lysosomes for degradation. Interacts with ABCG1; this interaction regulates ABCG1-mediated cholesterol efflux. Interacts with NEU3; this interaction enhances NEU3 sialidase activity within caveola. Interacts (via C-terminus) with SPRY1, SPRY2 (via C-terminus), SPRY3, and SPRY4. In terms of processing, phosphorylated at Tyr-14 by ABL1 in response to oxidative stress. Post-translationally, ubiquitinated. Undergo monoubiquitination and multi- and/or polyubiquitination. Monoubiquitination of N-terminal lysines promotes integration in a ternary complex with UBXN6 and VCP which promotes oligomeric CAV1 targeting to lysosomes for degradation. Ubiquitinated by ZNRF1; leading to degradation and modulation of the TLR4-mediated immune response.

The protein resides in the golgi apparatus membrane. It localises to the cell membrane. The protein localises to the membrane. It is found in the caveola. Its subcellular location is the membrane raft. Functionally, may act as a scaffolding protein within caveolar membranes. Forms a stable heterooligomeric complex with CAV2 that targets to lipid rafts and drives caveolae formation. Mediates the recruitment of CAVIN proteins (CAVIN1/2/3/4) to the caveolae. Interacts directly with G-protein alpha subunits and can functionally regulate their activity. Involved in the costimulatory signal essential for T-cell receptor (TCR)-mediated T-cell activation. Its binding to DPP4 induces T-cell proliferation and NF-kappa-B activation in a T-cell receptor/CD3-dependent manner. Recruits CTNNB1 to caveolar membranes and may regulate CTNNB1-mediated signaling through the Wnt pathway. Negatively regulates TGFB1-mediated activation of SMAD2/3 by mediating the internalization of TGFBR1 from membrane rafts leading to its subsequent degradation. Binds 20(S)-hydroxycholesterol (20(S)-OHC). This is Caveolin-1 (CAV1) from Otolemur garnettii (Small-eared galago).